The primary structure comprises 1004 residues: Glutamate [NMDA] receptor subunit 1 (1004 aa).

Residues Met1 to Ala39 form the signal peptide. Over Gln40–Ser585 the chain is Extracellular. Residues Asn270, Asn326, Asn357, Asn409, Asn466, Asn493, and Asn513 are each glycosylated (N-linked (GlcNAc...) asparagine). Glycine contacts are provided by residues Pro542 to Thr544 and Arg549. Residues Asn586 to Leu606 form a helical membrane-spanning segment. Residues Asp607 to Trp663 lie on the Cytoplasmic side of the membrane. The helical transmembrane segment at Ala664 to Leu684 threads the bilayer. Topologically, residues Glu685–Asn843 are extracellular. A glycan (N-linked (GlcNAc...) asparagine) is linked at Asn705. Positions 715 and 759 each coordinate glycine. Residues Met844–Ile864 traverse the membrane as a helical segment. The Cytoplasmic segment spans residues Glu865–Val1004. The segment at Thr980–Val1004 is disordered. The span at Gly994–Val1004 shows a compositional bias: polar residues.

This sequence belongs to the glutamate-gated ion channel (TC 1.A.10.1) family. In terms of assembly, forms a heteromeric NMDA channel with Nmdar2.

The protein localises to the cell membrane. Its subcellular location is the postsynaptic cell membrane. The protein resides in the postsynaptic density. Functionally, NMDA receptor subtype of glutamate-gated ion channels with high calcium permeability and voltage-dependent sensitivity to magnesium. Mediated by glycine. This protein plays a key role in synaptic plasticity, synaptogenesis, excitotoxicity, memory acquisition and learning. It mediates neuronal functions in glutamate neurotransmission. Is involved in the cell surface targeting of NMDA receptors. Plays a role in associative learning and in long-term memory consolidation. This Drosophila pseudoobscura pseudoobscura (Fruit fly) protein is Glutamate [NMDA] receptor subunit 1.